The chain runs to 81 residues: MSKVDNIEQKVIKIIADNQGKKIEEISVDLRFAEDLGVDSLSTVEIMMEIEKEFGVDVPDEEATKIKKVADVVNYIKEHKS.

Residues 2 to 80 (SKVDNIEQKV…DVVNYIKEHK (79 aa)) enclose the Carrier domain. S40 bears the O-(pantetheine 4'-phosphoryl)serine mark.

Belongs to the acyl carrier protein (ACP) family. In terms of processing, 4'-phosphopantetheine is transferred from CoA to a specific serine of apo-ACP by AcpS. This modification is essential for activity because fatty acids are bound in thioester linkage to the sulfhydryl of the prosthetic group.

It localises to the cytoplasm. The protein operates within lipid metabolism; fatty acid biosynthesis. Carrier of the growing fatty acid chain in fatty acid biosynthesis. The polypeptide is Acyl carrier protein (Rickettsia bellii (strain OSU 85-389)).